The chain runs to 100 residues: Nucleoid-associated protein RoseRS_1534 (100 aa).

This sequence belongs to the YbaB/EbfC family. Homodimer.

Its subcellular location is the cytoplasm. It is found in the nucleoid. In terms of biological role, binds to DNA and alters its conformation. May be involved in regulation of gene expression, nucleoid organization and DNA protection. The polypeptide is Nucleoid-associated protein RoseRS_1534 (Roseiflexus sp. (strain RS-1)).